The chain runs to 477 residues: Proton-coupled amino acid transporter 3 (477 aa).

The span at 1 to 13 shows a compositional bias: basic and acidic residues; that stretch reads MGKTPLLREDGRC. The tract at residues 1–42 is disordered; sequence MGKTPLLREDGRCQRNTFGGSKASSKGSSSSSSNNTVSSKKK. The Cytoplasmic segment spans residues 1-54; sequence MGKTPLLREDGRCQRNTFGGSKASSKGSSSSSSNNTVSSKKKPRRKADALMFIQ. Residues 19–38 show a composition bias toward low complexity; the sequence is GGSKASSKGSSSSSSNNTVS. The helical transmembrane segment at 55–75 threads the bilayer; sequence IFIHLLKSNIGTGFLGLPLAV. Topologically, residues 76 to 77 are extracellular; the sequence is KN. A helical membrane pass occupies residues 78 to 98; sequence AGLLVGPVSLLAIGALTVHCM. Topologically, residues 99 to 144 are cytoplasmic; sequence DILLNCACHLTSRLQRSFVNYEETTMYSLETCPSPWLRTHSVWGRY. The helical transmembrane segment at 145–165 threads the bilayer; that stretch reads VVSFLLIVTQLGFCSVYFMFM. Residues 166–202 are Extracellular-facing; the sequence is ADNLQQIVEEAHFTSNVCQPRQSLVMTSILDTRFYML. Residues 203 to 223 form a helical membrane-spanning segment; the sequence is TILPFLILLVLVQNPQVLSIF. Residues 224-225 are Cytoplasmic-facing; sequence ST. A helical membrane pass occupies residues 226–246; it reads LATITTLSSLALIFEYLIQIP. Over 247-259 the chain is Extracellular; the sequence is HHSHLPLVASWKT. The helical transmembrane segment at 260–280 threads the bilayer; sequence FLLFFGTAIFTFEGVGMVLPL. Residues 281–291 are Cytoplasmic-facing; sequence KSQMKSPQQFP. A helical transmembrane segment spans residues 292 to 312; it reads AVLYLGMSFVIFLYICLGTLG. Topologically, residues 313–344 are extracellular; the sequence is YMKFGADTQASITLNLPNCWLYQSVKLMYSVG. The helical transmembrane segment at 345–365 threads the bilayer; the sequence is IFFTYALQFHVPAEIIVPYVV. Residues 366–374 lie on the Cytoplasmic side of the membrane; that stretch reads SRASENWAL. A helical membrane pass occupies residues 375–395; the sequence is FIDLTVRAALVCLTCFSAVLI. Topologically, residues 396–399 are extracellular; it reads PRLD. The chain crosses the membrane as a helical span at residues 400-420; sequence LVISLVGSVSSSALALIIPPL. Topologically, residues 421–439 are cytoplasmic; that stretch reads LEIATFYSENISCTTIAKD. Residues 440 to 460 traverse the membrane as a helical segment; the sequence is IMISILGLLGCVLGTYQALYE. Residues 461–477 lie on the Extracellular side of the membrane; it reads MTQQSRFPMLNSTNVHT.

Belongs to the amino acid/polyamine transporter 2 family.

The protein resides in the membrane. This Rattus norvegicus (Rat) protein is Proton-coupled amino acid transporter 3 (Slc36a3).